The following is a 547-amino-acid chain: Apolipoprotein N-acyltransferase (547 aa).

6 helical membrane passes run 31 to 51 (PLPAWSLAPVQVIALAVAAHA), 65 to 85 (GWLFAMFSFSLGLYWLYVSMH), 89 to 109 (GLAAPLAAAGVLALSAFLALF), 144 to 164 (AACWAALEWLRAVVLTGFPWL), 181 to 201 (LLGVHGMALLAAFAAAALAGL), and 215 to 235 (LAAGVALLLAGAGWLLGQFSW). In terms of domain architecture, CN hydrolase spans 248–511 (VQGNVEQSQK…AGVLPVAVQG (264 aa)). Glutamate 292 serves as the catalytic Proton acceptor. Lysine 366 is a catalytic residue. Cysteine 416 functions as the Nucleophile in the catalytic mechanism.

Belongs to the CN hydrolase family. Apolipoprotein N-acyltransferase subfamily.

It localises to the cell inner membrane. The catalysed reaction is N-terminal S-1,2-diacyl-sn-glyceryl-L-cysteinyl-[lipoprotein] + a glycerophospholipid = N-acyl-S-1,2-diacyl-sn-glyceryl-L-cysteinyl-[lipoprotein] + a 2-acyl-sn-glycero-3-phospholipid + H(+). The protein operates within protein modification; lipoprotein biosynthesis (N-acyl transfer). Its function is as follows. Catalyzes the phospholipid dependent N-acylation of the N-terminal cysteine of apolipoprotein, the last step in lipoprotein maturation. In Bordetella bronchiseptica (strain ATCC BAA-588 / NCTC 13252 / RB50) (Alcaligenes bronchisepticus), this protein is Apolipoprotein N-acyltransferase.